Reading from the N-terminus, the 103-residue chain is ESAT-6-like protein EsxF (103 aa).

This sequence belongs to the WXG100 family. CFP-10 subfamily.

Its subcellular location is the secreted. The chain is ESAT-6-like protein EsxF from Mycobacterium tuberculosis (strain CDC 1551 / Oshkosh).